A 95-amino-acid chain; its full sequence is Citrate lyase acyl carrier protein (95 aa).

An O-(phosphoribosyl dephospho-coenzyme A)serine modification is found at S14.

The protein belongs to the CitD family. Oligomer with a subunit composition of (alpha,beta,gamma)6.

Its subcellular location is the cytoplasm. In terms of biological role, covalent carrier of the coenzyme of citrate lyase. This is Citrate lyase acyl carrier protein from Haemophilus influenzae (strain 86-028NP).